Here is a 701-residue protein sequence, read N- to C-terminus: Meprin A subunit beta (701 aa).

The signal sequence occupies residues 1–22 (MDLWNLSWFLFLDALLVISGLA). A propeptide spanning residues 23 to 61 (TPENFDVDGGMDQDIFDINEGLGLDLFEGDIRLDRAQIR) is cleaved from the precursor. At 23–652 (TPENFDVDGG…CEKRGSTRDT (630 aa)) the chain is on the extracellular side. The region spanning 62–256 (NSIIGEKYRW…LKLNQLYNCS (195 aa)) is the Peptidase M12A domain. Cystine bridges form between C103-C255, C124-C144, and C265-C427. H152 is a binding site for Zn(2+). The active site involves E153. 2 residues coordinate Zn(2+): H156 and H162. N-linked (GlcNAc...) asparagine glycans are attached at residues N218, N254, N370, N421, N436, N445, N547, and N592. Positions 260 to 429 (SFMDSCSFEL…INLSETRCPH (170 aa)) constitute an MAM domain. Residues 430-585 (HIWHIRNFTQ…GDDVYILLTV (156 aa)) form the MATH domain. An O-linked (GalNAc...) serine glycan is attached at S593. O-linked (GalNAc...) threonine glycosylation is found at T594 and T599. The segment at 595–607 (QIQLTPAPSVQDL) is required for proteolytic processing. S603 carries an O-linked (GalNAc...) serine glycan. One can recognise an EGF-like domain in the interval 604 to 644 (VQDLCSKTTCKNDGVCTVRDGKAECRCQSGEDWWYMGERCE). 3 cysteine pairs are disulfide-bonded: C608-C619, C613-C628, and C630-C643. The helical transmembrane segment at 653–673 (IVIAVSSTVAVFALMLIITLV) threads the bilayer. Residues 674–701 (SVYCTRKKYRERMSSNRPNLTPQNQHAF) are Cytoplasmic-facing. Position 694 is a phosphothreonine (T694).

In terms of assembly, homotetramer consisting of disulfide-linked beta subunits, or heterotetramer of two alpha and two beta subunits formed by non-covalent association of two disulfide-linked heterodimers. Interacts with MBL2 through its carbohydrate moiety. This interaction may inhibit its catalytic activity. Interacts with TSPAN8. Requires Zn(2+) as cofactor. Phosphorylated by PKC at multiple sites of its cytoplasmic part. Phosphorylation dcreases activity at the cell surface, leading to diminished substrate cleavage. Post-translationally, N-glycosylated; contains high mannose and/or complex biantennary structures. In terms of processing, O-glycosylation protect the C-terminal region from proteolytic cleavage and diminish secretion, this seems to be specific to human. Proteolytically activated by trypsin in the intestinal lumen and kallikrein-related peptidases in other tissues. As to expression, the major site of expression is the brush border membrane of small intestinal and kidney epithelial cells.

The protein localises to the cell membrane. It localises to the secreted. The catalysed reaction is Hydrolysis of proteins, including azocasein, and peptides. Hydrolysis of 5-His-|-Leu-6, 6-Leu-|-Cys-7, 14-Ala-|-Leu-15 and 19-Cys-|-Gly-20 bonds in insulin B chain.. With respect to regulation, strongly inhibited by fetuin-A/AHSG. Its function is as follows. Membrane metallopeptidase that sheds many membrane-bound proteins. Exhibits a strong preference for acidic amino acids at the P1' position. Known substrates include: FGF19, VGFA, IL1B, IL18, procollagen I and III, E-cadherin, KLK7, gastrin, ADAM10, tenascin-C. The presence of several pro-inflammatory cytokine among substrates implicate MEP1B in inflammation. It is also involved in tissue remodeling due to its capability to degrade extracellular matrix components. Also cleaves the amyloid precursor protein/APP, thereby releasing neurotoxic amyloid beta peptides. The chain is Meprin A subunit beta (MEP1B) from Homo sapiens (Human).